The following is a 483-amino-acid chain: PAT complex subunit CCDC47 (483 aa).

The signal sequence occupies residues 1–20 (MKAFYAFCVVLLVFGSVSEA). Residues 21 to 135 (KFDDFEDEED…PAHLQNSWES (115 aa)) lie on the Cytoplasmic side of the membrane. The disordered stretch occupies residues 46 to 119 (MEDSVTESPQ…DTSSNKNKDP (74 aa)). Positions 60-104 (TEDDEDEATVELEGQDESQEGDFEDADTQEGDTESEPYDDEEFEG) are enriched in acidic residues. A compositionally biased stretch (basic and acidic residues) spans 105 to 118 (YEDKPDTSSNKNKD). Residues 136–156 (YYLEILMVTGLLAYIMNYIIG) traverse the membrane as a helical segment. Residues 157–483 (KNKNSRLAQA…KMKQIKVKAM (327 aa)) lie on the Lumenal side of the membrane. A glycan (N-linked (GlcNAc...) asparagine) is linked at Asn178. The disordered stretch occupies residues 424–483 (QRQEAAQSRREEKKRAEKERIMNEEDPEKQRRLEEAALRREQKKLEKKQMKMKQIKVKAM). The segment covering 430-472 (QSRREEKKRAEKERIMNEEDPEKQRRLEEAALRREQKKLEKKQ) has biased composition (basic and acidic residues). A coiled-coil region spans residues 450 to 483 (PEKQRRLEEAALRREQKKLEKKQMKMKQIKVKAM). The segment covering 473 to 483 (MKMKQIKVKAM) has biased composition (basic residues).

It belongs to the CCDC47 family. In terms of assembly, component of the PAT complex, composed of WDR83OS/Asterix and CCDC47. The PAT complex is part of the multi-pass translocon (MPT) complex, composed of three subcomplexes, the GEL complex (composed of RAB5IF/OPTI and TMCO1), the BOS complex (composed of NCLN/Nicalin, NOMO1 and TMEM147) and the PAT complex (composed of WDR83OS/Asterix and CCDC47). The MPT complex associates with the SEC61 complex. Interacts with VCP, HSPA5, DERL1, DERL2 and SELENOS. In the embryo, expressed in the endodermal layer of the yolk sac and in the small intestine.

It localises to the endoplasmic reticulum membrane. Its subcellular location is the rough endoplasmic reticulum membrane. Its function is as follows. Component of the multi-pass translocon (MPT) complex that mediates insertion of multi-pass membrane proteins into the lipid bilayer of membranes. The MPT complex takes over after the SEC61 complex: following membrane insertion of the first few transmembrane segments of proteins by the SEC61 complex, the MPT complex occludes the lateral gate of the SEC61 complex to promote insertion of subsequent transmembrane regions. Within the MPT complex, the PAT subcomplex sequesters any highly polar regions in the transmembrane domains away from the non-polar membrane environment until they can be buried in the interior of the fully assembled protein. Within the PAT subcomplex, CCDC47 occludes the lateral gate of the SEC61 complex. Involved in the regulation of calcium ion homeostasis in the ER. Required for proper protein degradation via the ERAD (ER-associated degradation) pathway. Has an essential role in the maintenance of ER organization during embryogenesis. This Mus musculus (Mouse) protein is PAT complex subunit CCDC47.